Consider the following 130-residue polypeptide: Small ribosomal subunit protein uS11 (130 aa).

The protein belongs to the universal ribosomal protein uS11 family. As to quaternary structure, part of the 30S ribosomal subunit. Interacts with proteins S7 and S18. Binds to IF-3.

In terms of biological role, located on the platform of the 30S subunit, it bridges several disparate RNA helices of the 16S rRNA. Forms part of the Shine-Dalgarno cleft in the 70S ribosome. This Prochlorococcus marinus (strain NATL1A) protein is Small ribosomal subunit protein uS11.